The primary structure comprises 338 residues: TPR repeat-containing protein MJ0941 (338 aa).

TPR repeat units lie at residues 27 to 62 (LEAVANVLRAYRELFEGNLIKALYYVDKALELEPDF), 63 to 96 (YLALFLKGLALSAKGEIKEAITTFEELLSYESKN), 97 to 130 (PITWVFVGQLYGMSGNCDEALKCYNKALGIENRF), 131 to 164 (LSAFLLKTICLEFLGEYDELLKCYNEVLTYTPNF), 165 to 198 (VPMWVKKAEILRKLGRYEDALLCLNRALELKPHD), 199 to 232 (KNALYLKGVLLKRMGKFREALECFKKLIDELNVK), 268 to 301 (VALWYFKGELYERLGKLDEALKCYEKVIELQPHY), and 302 to 335 (IKALLSKARIYERQGNIEAAIEYYNKAVENIHKD).

This Methanocaldococcus jannaschii (strain ATCC 43067 / DSM 2661 / JAL-1 / JCM 10045 / NBRC 100440) (Methanococcus jannaschii) protein is TPR repeat-containing protein MJ0941.